The following is a 487-amino-acid chain: Serine/threonine-protein kinase 4 (487 aa).

Met1 bears the N-acetylmethionine mark. Thr3 is subject to Phosphothreonine. The region spanning 30–281 (FDVLEKLGEG…ATQLLQHPFV (252 aa)) is the Protein kinase domain. ATP-binding positions include 36-44 (LGEGSYGSV) and Lys59. Catalysis depends on Asp149, which acts as the Proton acceptor. Thr183 carries the phosphothreonine; by autocatalysis modification. Ser265 carries the post-translational modification Phosphoserine. Residues 290 to 310 (LRDLINEAMDVKLKRQEAQQR) are a coiled coil. Positions 305–337 (QEAQQREVDQDDEENSEEDELDSGTMVRAVGDE) are disordered. Residues 313–326 (DQDDEENSEEDELD) show a composition bias toward acidic residues. Ser320 carries the post-translational modification Phosphoserine. Residues Thr340 and Thr367 each carry the phosphothreonine modification. Thr387 carries the post-translational modification Phosphothreonine; by PKB/AKT1. Residues Ser410 and Ser414 each carry the phosphoserine modification. Tyr433 bears the Phosphotyrosine mark. One can recognise an SARAH domain in the interval 433-480 (YEFLKSWTVEDLQKRLLALDPMMEQEIEEIRQKYQSKRQPILDAIEAK).

Belongs to the protein kinase superfamily. STE Ser/Thr protein kinase family. STE20 subfamily. In terms of assembly, homodimer; mediated via the coiled-coil region. Interacts with NORE1, which inhibits autoactivation. Interacts with and stabilizes SAV1. Interacts with RASSF1. Interacts with FOXO3. Interacts with RASSF2 (via SARAH domain). Interacts with AR, PKB/AKT1, TNNI3 and SIRT1. Interacts with DLG5 (via PDZ domain 3). Interacts with MARK3 and SCRIB in the presence of DLG5. The cofactor is Mg(2+). Autophosphorylated on serine and threonine residues. Phosphorylation at Thr-387 by PKB/AKT1, leads to inhibition of its: kinase activity, nuclear translocation and autophosphorylation at Thr-183. It also diminishes its cleavage by caspases and its ability to phosphorylate FOXO3. Post-translationally, proteolytically cleaved by caspase-3 during apoptosis at Asp-326 and Asp-349 resulting in a 37 kDa or a 39 kDa subunit respectively. The 39 kDa subunit is further cleaved into the 37 kDa form. Proteolytic cleavage results in kinase activation and nuclear translocation of the truncated form (MST1/N). It is less likely that cleavage at Asp-349 is a prerequisite for activation as this site is not conserved in the murine ortholog.

The protein resides in the cytoplasm. It is found in the nucleus. The enzyme catalyses L-seryl-[protein] + ATP = O-phospho-L-seryl-[protein] + ADP + H(+). It carries out the reaction L-threonyl-[protein] + ATP = O-phospho-L-threonyl-[protein] + ADP + H(+). Its activity is regulated as follows. Inhibited by the C-terminal non-catalytic region. Activated by caspase-cleavage. Full activation also requires homodimerization and autophosphorylation of Thr-183. Activated by RASSF1 which acts by preventing its dephosphorylation. Functionally, stress-activated, pro-apoptotic kinase which, following caspase-cleavage, enters the nucleus and induces chromatin condensation followed by internucleosomal DNA fragmentation. Key component of the Hippo signaling pathway which plays a pivotal role in organ size control and tumor suppression by restricting proliferation and promoting apoptosis. The core of this pathway is composed of a kinase cascade wherein STK3/MST2 and STK4/MST1, in complex with its regulatory protein SAV1, phosphorylates and activates LATS1/2 in complex with its regulatory protein MOB1, which in turn phosphorylates and inactivates YAP1 oncoprotein and WWTR1/TAZ. Phosphorylation of YAP1 by LATS2 inhibits its translocation into the nucleus to regulate cellular genes important for cell proliferation, cell death, and cell migration. STK3/MST2 and STK4/MST1 are required to repress proliferation of mature hepatocytes, to prevent activation of facultative adult liver stem cells (oval cells), and to inhibit tumor formation. Phosphorylates 'Ser-14' of histone H2B (H2BS14ph) during apoptosis. Phosphorylates FOXO3 upon oxidative stress, which results in its nuclear translocation and cell death initiation. Phosphorylates MOBKL1A, MOBKL1B and RASSF2. Phosphorylates TNNI3 (cardiac Tn-I) and alters its binding affinity to TNNC1 (cardiac Tn-C) and TNNT2 (cardiac Tn-T). Phosphorylates FOXO1 on 'Ser-212' and regulates its activation and stimulates transcription of PMAIP1 in a FOXO1-dependent manner. Phosphorylates SIRT1 and inhibits SIRT1-mediated p53/TP53 deacetylation, thereby promoting p53/TP53 dependent transcription and apoptosis upon DNA damage. Acts as an inhibitor of PKB/AKT1. Phosphorylates AR on 'Ser-650' and suppresses its activity by intersecting with PKB/AKT1 signaling and antagonizing formation of AR-chromatin complexes. This is Serine/threonine-protein kinase 4 (STK4) from Otolemur garnettii (Small-eared galago).